The sequence spans 396 residues: Methionine import ATP-binding protein MetN 2 (396 aa).

The ABC transporter domain occupies 41–280 (VSFELVGKVF…PRHGATRALL (240 aa)). Residue 77–84 (GRSGAGKS) participates in ATP binding.

Belongs to the ABC transporter superfamily. Methionine importer (TC 3.A.1.24) family. In terms of assembly, the complex is composed of two ATP-binding proteins (MetN), two transmembrane proteins (MetI) and a solute-binding protein (MetQ).

Its subcellular location is the cell inner membrane. The catalysed reaction is L-methionine(out) + ATP + H2O = L-methionine(in) + ADP + phosphate + H(+). It carries out the reaction D-methionine(out) + ATP + H2O = D-methionine(in) + ADP + phosphate + H(+). Functionally, part of the ABC transporter complex MetNIQ involved in methionine import. Responsible for energy coupling to the transport system. In Burkholderia pseudomallei (strain 1710b), this protein is Methionine import ATP-binding protein MetN 2.